We begin with the raw amino-acid sequence, 190 residues long: MQLLKKRILQDGKCYEGGILKVDGFINHQMDPVLMKSIGVEFVRRFAATNVNKIMTIEASGIAPAIMTGYLMDLPVVFAKKKSPKTIQNALSTTVHSFTKDRDYEVVISADFLTPNDNVLFVDDFLAYGNAALGILDLIEQSGAKLVGMGFIIEKAFQNGRKILEEKGVRVESLAIIEDLSNCCIKIKDQ.

L20 and N27 together coordinate xanthine. A127–A131 provides a ligand contact to 5-phospho-alpha-D-ribose 1-diphosphate. K155 contacts xanthine.

Belongs to the purine/pyrimidine phosphoribosyltransferase family. Xpt subfamily. As to quaternary structure, homodimer.

It localises to the cytoplasm. It carries out the reaction XMP + diphosphate = xanthine + 5-phospho-alpha-D-ribose 1-diphosphate. It functions in the pathway purine metabolism; XMP biosynthesis via salvage pathway; XMP from xanthine: step 1/1. Functionally, converts the preformed base xanthine, a product of nucleic acid breakdown, to xanthosine 5'-monophosphate (XMP), so it can be reused for RNA or DNA synthesis. This chain is Xanthine phosphoribosyltransferase, found in Bacteroides thetaiotaomicron (strain ATCC 29148 / DSM 2079 / JCM 5827 / CCUG 10774 / NCTC 10582 / VPI-5482 / E50).